Here is a 734-residue protein sequence, read N- to C-terminus: Methylcrotonoyl-CoA carboxylase subunit alpha, mitochondrial (734 aa).

A mitochondrion-targeting transit peptide spans 1–25; sequence MSMMTVWALRRNVRRKNHSMLVRYI. The Biotin carboxylation domain occupies 37-484; it reads CIEKILVANR…ETHFIEHHKS (448 aa). ATP contacts are provided by lysine 152, glutamate 236, and histidine 271. One can recognise an ATP-grasp domain in the interval 156–354; the sequence is KRIMGAAGVP…LVEWQIRVAN (199 aa). Residues glutamate 311, glutamate 325, and asparagine 327 each contribute to the Mn(2+) site. Arginine 329 is an active-site residue. Phosphoserine is present on serine 645. The segment at 645 to 666 is disordered; the sequence is SEDEEGVQHRTSSETSSHPPGT. The Biotinyl-binding domain occupies 657 to 733; sequence SETSSHPPGT…SDGSALFRIK (77 aa). Lysine 699 bears the N6-biotinyllysine mark.

In terms of assembly, probably a heterodimer composed of biotin-containing alpha subunits and beta subunits. Biotin serves as cofactor. It depends on Mn(2+) as a cofactor. As to expression, in roots, cotyledons, leaves, flowers, ovaries, siliques and embryos.

The protein resides in the mitochondrion matrix. It catalyses the reaction 3-methylbut-2-enoyl-CoA + hydrogencarbonate + ATP = 3-methyl-(2E)-glutaconyl-CoA + ADP + phosphate + H(+). It participates in amino-acid degradation; L-leucine degradation; (S)-3-hydroxy-3-methylglutaryl-CoA from 3-isovaleryl-CoA: step 2/3. Biotin-attachment subunit of the 3-methylcrotonyl-CoA carboxylase, an enzyme that catalyzes the conversion of 3-methylcrotonyl-CoA to 3-methylglutaconyl-CoA, a critical step for leucine and isovaleric acid catabolism. In Arabidopsis thaliana (Mouse-ear cress), this protein is Methylcrotonoyl-CoA carboxylase subunit alpha, mitochondrial (MCCA).